Consider the following 347-residue polypeptide: Bifunctional methylenetetrahydrofolate dehydrogenase/cyclohydrolase 2, mitochondrial (347 aa).

Residues 98 to 102 and 145 to 147 each bind substrate; these read YVRNK and VQL. NAD(+) is bound by residues 214-216 and Arg-247; that span reads GRS. Residue 323–327 coordinates substrate; the sequence is PGGVG.

The protein belongs to the tetrahydrofolate dehydrogenase/cyclohydrolase family. Mg(2+) serves as cofactor. Isoform 1, isoform 4 and isoform 5 are expressed in brain and placenta.

The protein resides in the mitochondrion inner membrane. It catalyses the reaction (6R)-5,10-methylene-5,6,7,8-tetrahydrofolate + NAD(+) = (6R)-5,10-methenyltetrahydrofolate + NADH. It carries out the reaction (6R)-5,10-methenyltetrahydrofolate + H2O = (6R)-10-formyltetrahydrofolate + H(+). The catalysed reaction is (6R)-5,10-methylene-5,6,7,8-tetrahydrofolate + NADP(+) = (6R)-5,10-methenyltetrahydrofolate + NADPH. It participates in one-carbon metabolism; tetrahydrofolate interconversion. Its function is as follows. Bifunctional mitochondrial folate-interconverting enzyme that has both NAD/NADP-dependent methylenetetrahydrofolate dehydrogenase and methenyltetrahydrofolate cyclohydrolase activities. The polypeptide is Bifunctional methylenetetrahydrofolate dehydrogenase/cyclohydrolase 2, mitochondrial (Homo sapiens (Human)).